A 235-amino-acid chain; its full sequence is Pyridoxine/pyridoxamine 5'-phosphate oxidase (235 aa).

Residues 30 to 33 (RQEY) and Lys-88 contribute to the substrate site. FMN contacts are provided by residues 83-88 (RTVLLK), 98-99 (YT), Arg-104, Lys-105, and Gln-127. Substrate is bound by residues Tyr-145, Arg-149, and Ser-153. FMN is bound by residues 162–163 (QS) and Trp-207. Position 213 to 215 (213 to 215 (RLH)) interacts with substrate. Arg-217 is an FMN binding site.

Belongs to the pyridoxamine 5'-phosphate oxidase family. Homodimer. Requires FMN as cofactor.

It carries out the reaction pyridoxamine 5'-phosphate + O2 + H2O = pyridoxal 5'-phosphate + H2O2 + NH4(+). The catalysed reaction is pyridoxine 5'-phosphate + O2 = pyridoxal 5'-phosphate + H2O2. Its pathway is cofactor metabolism; pyridoxal 5'-phosphate salvage; pyridoxal 5'-phosphate from pyridoxamine 5'-phosphate: step 1/1. It functions in the pathway cofactor metabolism; pyridoxal 5'-phosphate salvage; pyridoxal 5'-phosphate from pyridoxine 5'-phosphate: step 1/1. Its function is as follows. Catalyzes the oxidation of either pyridoxine 5'-phosphate (PNP) or pyridoxamine 5'-phosphate (PMP) into pyridoxal 5'-phosphate (PLP). In Bacteroides fragilis (strain YCH46), this protein is Pyridoxine/pyridoxamine 5'-phosphate oxidase.